Reading from the N-terminus, the 896-residue chain is Translation initiation factor IF-2 (896 aa).

Positions 32-306 are disordered; that stretch reads LAQAGSSDTK…HKTKKQSEEH (275 aa). 2 stretches are compositionally biased toward polar residues: residues 35–48 and 114–126; these read AGSS…VSKA and ADST…SSQE. Residues 156-170 show a composition bias toward basic and acidic residues; the sequence is ARNEETPIIRTRTEP. Positions 213 to 237 are enriched in polar residues; that stretch reads QQTRPSVETASTKQQQPSGTNTRPA. Over residues 256 to 280 the composition is skewed to basic and acidic residues; the sequence is RGPDRDRTKRSDENVKAFTGRDRYG. Positions 401–570 constitute a tr-type G domain; the sequence is IRSPIVAFMG…ALQAEVLELK (170 aa). Residues 410–417 form a G1 region; it reads GHVDHGKT. GTP is bound at residue 410 to 417; it reads GHVDHGKT. Residues 435-439 form a G2 region; that stretch reads AITQH. The interval 456–459 is G3; sequence DTPG. Residues 456 to 460 and 510 to 513 contribute to the GTP site; these read DTPGH and NKCD. The segment at 510–513 is G4; sequence NKCD. The G5 stretch occupies residues 546–548; sequence SAK.

It belongs to the TRAFAC class translation factor GTPase superfamily. Classic translation factor GTPase family. IF-2 subfamily.

The protein resides in the cytoplasm. One of the essential components for the initiation of protein synthesis. Protects formylmethionyl-tRNA from spontaneous hydrolysis and promotes its binding to the 30S ribosomal subunits. Also involved in the hydrolysis of GTP during the formation of the 70S ribosomal complex. The chain is Translation initiation factor IF-2 (infB) from Chlamydia muridarum (strain MoPn / Nigg).